The sequence spans 463 residues: Formate-nitrite transporter 2 (463 aa).

Over 1–100 (MCSIPPLRLL…VKKTQLRIDR (100 aa)) the chain is Cytoplasmic. The chain crosses the membrane as a helical span at residues 101–121 (LLLQAFMAGIFVAMAGHCCTV). Residues 122–142 (LAGSYPTDPGDPLAVAKPTQK) are Extracellular-facing. The helical transmembrane segment at 143 to 163 (FIYGALFPVAFICIILTGAEL) threads the bilayer. Topologically, residues 164-189 (FTGNTMTMLICYFQKRVTMLQLGVNW) are cytoplasmic. The helical transmembrane segment at 190-210 (LGSLAGNWLGALFGAYFLSYL) threads the bilayer. At 211–237 (TGALGDEHVRQFLFRTCVNKISYGWGE) the chain is on the extracellular side. The chain crosses the membrane as a helical span at residues 238–258 (CFLRGVGCNTFVCLAVWAVIA). Residues 259–265 (SENVAGK) lie on the Cytoplasmic side of the membrane. A helical transmembrane segment spans residues 266–286 (VLVMWFPIVAFCVGGYEHIIA). Over 287–305 (NMYTLQAGLMAGAPVAILD) the chain is Extracellular. A helical transmembrane segment spans residues 306–326 (VIAFNFLPTLLGNIVGGCLLV). Over 327-463 (GAVYAYNFYP…QTAESVAQQV (137 aa)) the chain is Cytoplasmic. The interval 424–463 (SGNLSTHARLDLPNRPVEPPSDGLEVTPQSQTAESVAQQV) is disordered. Residues 450 to 463 (TPQSQTAESVAQQV) show a composition bias toward polar residues.

It belongs to the FNT transporter (TC 1.A.16) family. In terms of assembly, homopentamer.

It is found in the cell membrane. The catalysed reaction is (S)-lactate(in) + H(+)(in) = (S)-lactate(out) + H(+)(out). It catalyses the reaction formate(in) + H(+)(in) = formate(out) + H(+)(out). The enzyme catalyses pyruvate(out) + H(+)(out) = pyruvate(in) + H(+)(in). It carries out the reaction acetate(out) + H(+)(out) = acetate(in) + H(+)(in). Inhibited by p-chloromercuribenzene sulfonate (pCMBS). Methyl methanethiosulfonate (MMTS) inhibits L-lactate but not formate transport. Inhibited by the Malaria Box compound MMV007839. Inhibited by BH-296, BH-317, BH-326 and BH-388 compounds. In terms of biological role, monocarboxylate-proton symporter; active in acidic-to-neutral pH range. Transports L-lactate and formate. The protein is Formate-nitrite transporter 2 of Toxoplasma gondii (strain ATCC 50611 / Me49).